A 166-amino-acid chain; its full sequence is Myeloid-derived growth factor (166 aa).

Residues 1-24 (MAAPSGGFWTAVVLAAAALKLAAA) form the signal peptide.

Belongs to the MYDGF family. Expressed in prostate, spleen and lung, and weakly expressed in the left ventricle (LF) and liver. Expressed predominantly in inflammatory cells, such as monocytes and macrophages, and weakly expressed in neutrophils, T-cells, B-cells, endothelial cells and cardiac myocytes, after myocardial infarction (MI) (at protein level).

It localises to the secreted. It is found in the endoplasmic reticulum-Golgi intermediate compartment. The protein localises to the endoplasmic reticulum. The protein resides in the golgi apparatus. Its function is as follows. Bone marrow-derived monocyte and paracrine-acting protein that promotes cardiac myocyte survival and adaptive angiogenesis for cardiac protection and/or repair after myocardial infarction (MI). Stimulates endothelial cell proliferation through a MAPK1/3-, STAT3- and CCND1-mediated signaling pathway. Inhibits cardiac myocyte apoptosis in a PI3K/AKT-dependent signaling pathway. This Mus musculus (Mouse) protein is Myeloid-derived growth factor.